A 648-amino-acid polypeptide reads, in one-letter code: Mitochondrial Rho GTPase 1 (648 aa).

At Met-1 to Ser-619 the chain is on the cytoplasmic side. Position 14 is a phosphoserine (Ser-14). The region spanning Pro-15–His-182 is the Miro 1 domain. EF-hand domains follow at residues Arg-198–Ala-233 and Ala-319–Ser-354. Residues Asp-211, Asp-213, Asp-215, Glu-222, Asp-332, Asp-334, Asp-336, Asn-338, and Glu-343 each contribute to the Ca(2+) site. In terms of domain architecture, Miro 2 spans Arg-427–His-595. The chain crosses the membrane as a helical span at residues Leu-620–Tyr-640. The Mitochondrial intermembrane segment spans residues Ala-641 to Ala-648.

The protein belongs to the mitochondrial Rho GTPase family. In terms of tissue distribution, expressed in roots, leaves, stems, flowers and siliques.

The protein resides in the mitochondrion outer membrane. In terms of biological role, mitochondrial GTPase required to maintain proper development, morphology and intracellular distribution of mitochondria, which in turn are essential for the progress of embryonic cell division, development of haploid male and female gametes, and pollen tube growth. This is Mitochondrial Rho GTPase 1 from Arabidopsis thaliana (Mouse-ear cress).